The sequence spans 290 residues: 4-hydroxybenzoate octaprenyltransferase (290 aa).

A run of 8 helical transmembrane segments spans residues 23–43, 46–66, 99–119, 141–161, 163–183, 213–233, 234–254, and 268–288; these read IGAL…TPGV, LWIL…GCVV, LFVV…TMTI, LPQV…FAAV, ESVP…AVAY, LIIG…GELN, GLGW…VYQQ, and AFMN…MSYW.

It belongs to the UbiA prenyltransferase family. Requires Mg(2+) as cofactor.

It is found in the cell inner membrane. The catalysed reaction is all-trans-octaprenyl diphosphate + 4-hydroxybenzoate = 4-hydroxy-3-(all-trans-octaprenyl)benzoate + diphosphate. It functions in the pathway cofactor biosynthesis; ubiquinone biosynthesis. Its function is as follows. Catalyzes the prenylation of para-hydroxybenzoate (PHB) with an all-trans polyprenyl group. Mediates the second step in the final reaction sequence of ubiquinone-8 (UQ-8) biosynthesis, which is the condensation of the polyisoprenoid side chain with PHB, generating the first membrane-bound Q intermediate 3-octaprenyl-4-hydroxybenzoate. The protein is 4-hydroxybenzoate octaprenyltransferase of Escherichia coli (strain SE11).